Reading from the N-terminus, the 1261-residue chain is Mediator of RNA polymerase II transcription subunit 14 (1261 aa).

A compositionally biased stretch (basic and acidic residues) spans 1–11 (MPNGKQQHEVT). Disordered regions lie at residues 1 to 21 (MPNGKQQHEVTESSSPPEIPH), 413 to 435 (NETAIVDDNDNDNDDTNNTGETE), and 1193 to 1220 (DNDIKPQQQEPQQNEKENSKTTSKENET). A compositionally biased stretch (acidic residues) spans 417–427 (IVDDNDNDNDD). Residues 1205 to 1220 (QNEKENSKTTSKENET) are compositionally biased toward basic and acidic residues.

The protein belongs to the Mediator complex subunit 14 family. In terms of assembly, component of the Mediator complex.

Its subcellular location is the nucleus. Component of the Mediator complex, a coactivator involved in the regulated transcription of nearly all RNA polymerase II-dependent genes. Mediator functions as a bridge to convey information from gene-specific regulatory proteins to the basal RNA polymerase II transcription machinery. Mediator is recruited to promoters by direct interactions with regulatory proteins and serves as a scaffold for the assembly of a functional preinitiation complex with RNA polymerase II and the general transcription factors. In Candida albicans (strain SC5314 / ATCC MYA-2876) (Yeast), this protein is Mediator of RNA polymerase II transcription subunit 14 (MED14).